A 284-amino-acid chain; its full sequence is Glutamate 5-kinase 2 (284 aa).

Position 26 (Lys26) interacts with ATP. The substrate site is built by Ser67, Asp154, and Asn166. Residues 186-187 and 228-234 each bind ATP; these read SD and SGGMVTK.

The protein belongs to the glutamate 5-kinase family.

It localises to the cytoplasm. The catalysed reaction is L-glutamate + ATP = L-glutamyl 5-phosphate + ADP. Its pathway is amino-acid biosynthesis; L-proline biosynthesis; L-glutamate 5-semialdehyde from L-glutamate: step 1/2. Functionally, catalyzes the transfer of a phosphate group to glutamate to form L-glutamate 5-phosphate. This is Glutamate 5-kinase 2 from Mesorhizobium japonicum (strain LMG 29417 / CECT 9101 / MAFF 303099) (Mesorhizobium loti (strain MAFF 303099)).